A 97-amino-acid chain; its full sequence is MKIEKCGWSEGLTSIKGNCHNFYTAISKDVTYKELKNLLNSKNIMLIDVREIWEILEYQKIPESINVPLDEVGEALQMNPRDFKEKYNEVKPSKSDS.

The Rhodanese domain maps to 32–84 (YKELKNLLNSKNIMLIDVREIWEILEYQKIPESINVPLDEVGEALQMNPRDFK). N6-succinyllysine is present on K84.

The chain is Thiosulfate sulfurtransferase/rhodanese-like domain-containing protein 3 (TSTD3) from Homo sapiens (Human).